Here is a 278-residue protein sequence, read N- to C-terminus: Putative cysteine-rich repeat secretory protein 19 (278 aa).

The first 32 residues, 1-32 (MYSSSSVSKRFVLVPIVVVVTTQLLLVRNVSS), serve as a signal peptide directing secretion. Gnk2-homologous domains lie at 39–147 (YLHH…SLDT) and 160–267 (PSAK…LYPF).

Belongs to the cysteine-rich repeat secretory protein family.

The protein resides in the secreted. The chain is Putative cysteine-rich repeat secretory protein 19 (CRRSP19) from Arabidopsis thaliana (Mouse-ear cress).